We begin with the raw amino-acid sequence, 324 residues long: Dolichyl-phosphate beta-glucosyltransferase (324 aa).

The Lumenal portion of the chain corresponds to 1-7 (MAPLLLQ). The chain crosses the membrane as a helical; Signal-anchor for type II membrane protein span at residues 8–28 (LAVLGAALAAAALVLISIVAF). The Cytoplasmic portion of the chain corresponds to 29–324 (TTATKMPALH…WRLEQTRKMN (296 aa)).

This sequence belongs to the glycosyltransferase 2 family. Expressed in pancreas, placenta, liver, heart, brain, kidney, skeletal muscle, and lung.

It localises to the endoplasmic reticulum membrane. The catalysed reaction is a di-trans,poly-cis-dolichyl phosphate + UDP-alpha-D-glucose = a di-trans,poly-cis-dolichyl beta-D-glucosyl phosphate + UDP. The protein operates within protein modification; protein glycosylation. Functionally, dolichyl-phosphate beta-glucosyltransferase that operates in the biosynthetic pathway of dolichol-linked oligosaccharides, the glycan precursors employed in protein asparagine (N)-glycosylation. The assembly of dolichol-linked oligosaccharides begins on the cytosolic side of the endoplasmic reticulum membrane and finishes in its lumen. The sequential addition of sugars to dolichol pyrophosphate produces dolichol-linked oligosaccharides containing fourteen sugars, including two GlcNAcs, nine mannoses and three glucoses. Once assembled, the oligosaccharide is transferred from the lipid to nascent proteins by oligosaccharyltransferases. Dolichyl-phosphate beta-glucosyltransferase produces dolichyl beta-D-glucosyl phosphate/Dol-P-Glc, the glucose donor substrate used sequentially by ALG6, ALG8 and ALG10 to add glucose residues on top of the Man(9)GlcNAc(2)-PP-Dol structure. These are the three last steps in the biosynthetic pathway of dolichol-linked oligosaccharides to produce Glc(3)Man(9)GlcNAc(2)-PP-Dol. The enzyme is most probably active on the cytoplasmic side of the endoplasmic reticulum while its product Dol-P-Glc is the substrate for ALG6, ALG8 and ALG11 in the lumen of the endoplasmic reticulum. The protein is Dolichyl-phosphate beta-glucosyltransferase of Homo sapiens (Human).